The primary structure comprises 427 residues: Dihydroorotase (427 aa).

Zn(2+) is bound by residues histidine 60 and histidine 62. Substrate-binding positions include 62 to 64 and asparagine 94; that span reads HLR. The Zn(2+) site is built by aspartate 151, histidine 178, and histidine 231. A substrate-binding site is contributed by asparagine 277. Aspartate 304 contacts Zn(2+). Residue aspartate 304 is part of the active site. Residues histidine 308 and 322 to 323 each bind substrate; that span reads FG.

It belongs to the metallo-dependent hydrolases superfamily. DHOase family. Class I DHOase subfamily. Zn(2+) serves as cofactor.

It carries out the reaction (S)-dihydroorotate + H2O = N-carbamoyl-L-aspartate + H(+). It functions in the pathway pyrimidine metabolism; UMP biosynthesis via de novo pathway; (S)-dihydroorotate from bicarbonate: step 3/3. Its function is as follows. Catalyzes the reversible cyclization of carbamoyl aspartate to dihydroorotate. The polypeptide is Dihydroorotase (Pelotomaculum thermopropionicum (strain DSM 13744 / JCM 10971 / SI)).